A 654-amino-acid polypeptide reads, in one-letter code: Acetyl-coenzyme A synthetase (654 aa).

CoA is bound by residues 190–193 (RGGK) and threonine 313. ATP contacts are provided by residues 389–391 (GEP), 413–418 (DTWWQT), aspartate 504, and arginine 519. Serine 527 contacts CoA. Arginine 530 contributes to the ATP binding site. Valine 541, histidine 543, and valine 546 together coordinate Mg(2+). Lysine 613 is modified (N6-acetyllysine).

It belongs to the ATP-dependent AMP-binding enzyme family. Requires Mg(2+) as cofactor. In terms of processing, acetylated. Deacetylation by the SIR2-homolog deacetylase activates the enzyme.

It carries out the reaction acetate + ATP + CoA = acetyl-CoA + AMP + diphosphate. Its function is as follows. Catalyzes the conversion of acetate into acetyl-CoA (AcCoA), an essential intermediate at the junction of anabolic and catabolic pathways. AcsA undergoes a two-step reaction. In the first half reaction, AcsA combines acetate with ATP to form acetyl-adenylate (AcAMP) intermediate. In the second half reaction, it can then transfer the acetyl group from AcAMP to the sulfhydryl group of CoA, forming the product AcCoA. The sequence is that of Acetyl-coenzyme A synthetase from Leptospira biflexa serovar Patoc (strain Patoc 1 / Ames).